Here is an 868-residue protein sequence, read N- to C-terminus: Leucine--tRNA ligase (868 aa).

Positions 42–52 match the 'HIGH' region motif; it reads PYPSGKLHMGH. Residues 627–631 carry the 'KMSKS' region motif; the sequence is KMSKS. An ATP-binding site is contributed by Lys-630.

This sequence belongs to the class-I aminoacyl-tRNA synthetase family.

It localises to the cytoplasm. It carries out the reaction tRNA(Leu) + L-leucine + ATP = L-leucyl-tRNA(Leu) + AMP + diphosphate. This is Leucine--tRNA ligase from Pseudomonas putida (strain ATCC 47054 / DSM 6125 / CFBP 8728 / NCIMB 11950 / KT2440).